The primary structure comprises 249 residues: Metallo-beta-lactamase type 2 (249 aa).

Positions 1-22 (MLKRLKGLLVLALGFTGLQVFG) are cleaved as a signal peptide. Positions 98, 100, 102, 161, and 180 each coordinate Zn(2+). Lysine 183 lines the substrate pocket. A Zn(2+)-binding site is contributed by histidine 222.

Belongs to the metallo-beta-lactamase superfamily. Class-B beta-lactamase family. Monomer. The cofactor is Zn(2+).

It localises to the periplasm. The enzyme catalyses a beta-lactam + H2O = a substituted beta-amino acid. Confers resistance to the different beta-lactams antibiotics (penicillin, cephalosporin and carbapenem) via the hydrolysis of the beta-lactam ring. The protein is Metallo-beta-lactamase type 2 (blaB5) of Elizabethkingia meningoseptica (Chryseobacterium meningosepticum).